A 214-amino-acid chain; its full sequence is A-type ATP synthase subunit D (214 aa).

Belongs to the V-ATPase D subunit family. In terms of assembly, has multiple subunits with at least A(3), B(3), C, D, E, F, H, I and proteolipid K(x).

The protein localises to the cell membrane. In terms of biological role, component of the A-type ATP synthase that produces ATP from ADP in the presence of a proton gradient across the membrane. This Thermococcus sibiricus (strain DSM 12597 / MM 739) protein is A-type ATP synthase subunit D.